A 365-amino-acid chain; its full sequence is DNA polymerase IV 1 (365 aa).

In terms of domain architecture, UmuC spans 6–196 (VLHIDMDYFF…LNVSKLWGIG (191 aa)). Residues aspartate 10 and aspartate 113 each contribute to the Mg(2+) site. Glutamate 114 is an active-site residue.

Belongs to the DNA polymerase type-Y family. Monomer. Mg(2+) is required as a cofactor.

The protein localises to the cytoplasm. It carries out the reaction DNA(n) + a 2'-deoxyribonucleoside 5'-triphosphate = DNA(n+1) + diphosphate. In terms of biological role, poorly processive, error-prone DNA polymerase involved in untargeted mutagenesis. Copies undamaged DNA at stalled replication forks, which arise in vivo from mismatched or misaligned primer ends. These misaligned primers can be extended by PolIV. Exhibits no 3'-5' exonuclease (proofreading) activity. May be involved in translesional synthesis. In Methanosarcina mazei (strain ATCC BAA-159 / DSM 3647 / Goe1 / Go1 / JCM 11833 / OCM 88) (Methanosarcina frisia), this protein is DNA polymerase IV 1 (dbh1).